Consider the following 228-residue polypeptide: Orotidine 5'-phosphate decarboxylase (228 aa).

Residues D20, K42, 70-79, S127, 180-190, G202, and R203 contribute to the substrate site; these read DFKVADIPET and PGVGAQGGDPG. K72 serves as the catalytic Proton donor.

The protein belongs to the OMP decarboxylase family. Type 1 subfamily. As to quaternary structure, homodimer.

It carries out the reaction orotidine 5'-phosphate + H(+) = UMP + CO2. It functions in the pathway pyrimidine metabolism; UMP biosynthesis via de novo pathway; UMP from orotate: step 2/2. Functionally, catalyzes the decarboxylation of orotidine 5'-monophosphate (OMP) to uridine 5'-monophosphate (UMP). The chain is Orotidine 5'-phosphate decarboxylase (pyrF) from Methanothermobacter thermautotrophicus (strain ATCC 29096 / DSM 1053 / JCM 10044 / NBRC 100330 / Delta H) (Methanobacterium thermoautotrophicum).